A 163-amino-acid polypeptide reads, in one-letter code: ATP synthase subunit b 1 (163 aa).

Residues 5–25 (FDATFFAFVGLILFLALVVYL) traverse the membrane as a helical segment.

It belongs to the ATPase B chain family. In terms of assembly, F-type ATPases have 2 components, F(1) - the catalytic core - and F(0) - the membrane proton channel. F(1) has five subunits: alpha(3), beta(3), gamma(1), delta(1), epsilon(1). F(0) has three main subunits: a(1), b(2) and c(10-14). The alpha and beta chains form an alternating ring which encloses part of the gamma chain. F(1) is attached to F(0) by a central stalk formed by the gamma and epsilon chains, while a peripheral stalk is formed by the delta and b chains.

Its subcellular location is the cell inner membrane. In terms of biological role, f(1)F(0) ATP synthase produces ATP from ADP in the presence of a proton or sodium gradient. F-type ATPases consist of two structural domains, F(1) containing the extramembraneous catalytic core and F(0) containing the membrane proton channel, linked together by a central stalk and a peripheral stalk. During catalysis, ATP synthesis in the catalytic domain of F(1) is coupled via a rotary mechanism of the central stalk subunits to proton translocation. Functionally, component of the F(0) channel, it forms part of the peripheral stalk, linking F(1) to F(0). The protein is ATP synthase subunit b 1 of Rhizobium etli (strain ATCC 51251 / DSM 11541 / JCM 21823 / NBRC 15573 / CFN 42).